The sequence spans 571 residues: Polypeptide N-acetylgalactosaminyltransferase 2 (571 aa).

At M1–R6 the chain is on the cytoplasmic side. The helical; Signal-anchor for type II membrane protein transmembrane segment at M7–Y24 threads the bilayer. Topologically, residues S25–Q571 are lumenal. O-linked (Xyl...) (chondroitin sulfate) serine glycosylation occurs at S29. Residues K53–Q66 show a composition bias toward basic and acidic residues. The tract at residues K53 to G74 is disordered. 4 disulfides stabilise this stretch: C126–C354, C345–C423, C456–C473, and C496–C513. The interval L135–R240 is catalytic subdomain A. Substrate-binding residues include T143, D176, and R201. D224 contacts Mn(2+). S225 is a binding site for substrate. H226 is a Mn(2+) binding site. Residues P300–R362 form a catalytic subdomain B region. W331 contacts substrate. Residue H359 coordinates Mn(2+). Substrate-binding residues include R362, H365, and Y367. One can recognise a Ricin B-type lectin domain in the interval Q443–T566. Residue S536 is modified to Phosphoserine. A disulfide bridge links C539 with C555.

The protein belongs to the glycosyltransferase 2 family. GalNAc-T subfamily. It depends on Mn(2+) as a cofactor. As to expression, detected in urine (at protein level). Widely expressed.

It localises to the golgi apparatus. It is found in the golgi stack membrane. The protein resides in the secreted. The catalysed reaction is L-seryl-[protein] + UDP-N-acetyl-alpha-D-galactosamine = a 3-O-[N-acetyl-alpha-D-galactosaminyl]-L-seryl-[protein] + UDP + H(+). It carries out the reaction L-threonyl-[protein] + UDP-N-acetyl-alpha-D-galactosamine = a 3-O-[N-acetyl-alpha-D-galactosaminyl]-L-threonyl-[protein] + UDP + H(+). The protein operates within protein modification; protein glycosylation. In terms of biological role, catalyzes the initial reaction in O-linked oligosaccharide biosynthesis, the transfer of an N-acetyl-D-galactosamine residue to a serine or threonine residue on the protein receptor. Has a broad spectrum of substrates for peptides such as EA2, Muc5AC, Muc1a, Muc1b. Probably involved in O-linked glycosylation of the immunoglobulin A1 (IgA1) hinge region. Involved in O-linked glycosylation of APOC-III, ANGPTL3 and PLTP. It participates in the regulation of HDL-C metabolism. The chain is Polypeptide N-acetylgalactosaminyltransferase 2 (GALNT2) from Homo sapiens (Human).